Consider the following 265-residue polypeptide: Hydroxyethylthiazole kinase (265 aa).

Met44 is a binding site for substrate. Residues Lys120 and Thr166 each coordinate ATP. Gly193 provides a ligand contact to substrate.

Belongs to the Thz kinase family. Requires Mg(2+) as cofactor.

It catalyses the reaction 5-(2-hydroxyethyl)-4-methylthiazole + ATP = 4-methyl-5-(2-phosphooxyethyl)-thiazole + ADP + H(+). It functions in the pathway cofactor biosynthesis; thiamine diphosphate biosynthesis; 4-methyl-5-(2-phosphoethyl)-thiazole from 5-(2-hydroxyethyl)-4-methylthiazole: step 1/1. In terms of biological role, catalyzes the phosphorylation of the hydroxyl group of 4-methyl-5-beta-hydroxyethylthiazole (THZ). This chain is Hydroxyethylthiazole kinase, found in Clostridium novyi (strain NT).